We begin with the raw amino-acid sequence, 777 residues long: Ribosome-releasing factor 2, mitochondrial (777 aa).

The tr-type G domain maps to 68–353 (AKIRNIGIMA…AVTMYLPSPE (286 aa)). Residues 77–84 (AHIDAGKT), 141–145 (DTPGH), and 195–198 (NKMD) contribute to the GTP site.

Belongs to the TRAFAC class translation factor GTPase superfamily. Classic translation factor GTPase family. EF-G/EF-2 subfamily.

It localises to the mitochondrion. It carries out the reaction GTP + H2O = GDP + phosphate + H(+). Its function is as follows. Mitochondrial GTPase that mediates the disassembly of ribosomes from messenger RNA at the termination of mitochondrial protein biosynthesis. Acts in collaboration with MRRF. GTP hydrolysis follows the ribosome disassembly and probably occurs on the ribosome large subunit. Not involved in the GTP-dependent ribosomal translocation step during translation elongation. This Pongo abelii (Sumatran orangutan) protein is Ribosome-releasing factor 2, mitochondrial.